We begin with the raw amino-acid sequence, 628 residues long: DNA-directed RNA polymerase III subunit RPC3 (628 aa).

The segment covering 360–383 (EVDGEASADEDEGEDESSEESDYD) has biased composition (acidic residues). A disordered region spans residues 360–422 (EVDGEASADE…SAAPKERRMD (63 aa)). Positions 390 to 406 (TTHGTNGVNGTNGTNGT) are enriched in low complexity. Residues 408-422 (VKFDESAAPKERRMD) show a composition bias toward basic and acidic residues. A leucine-zipper region spans residues 555–576 (GYVTMVHCLQVLEALRRKERDV).

This sequence belongs to the RNA polymerase beta chain family. Component of the RNA polymerase III (Pol III) complex consisting of 17 subunits.

The protein resides in the nucleus. Its function is as follows. DNA-dependent RNA polymerase catalyzes the transcription of DNA into RNA using the four ribonucleoside triphosphates as substrates. Specific core component of RNA polymerase III which synthesizes small RNAs, such as 5S rRNA and tRNAs. This is DNA-directed RNA polymerase III subunit RPC3 (RPC82) from Chaetomium globosum (strain ATCC 6205 / CBS 148.51 / DSM 1962 / NBRC 6347 / NRRL 1970) (Soil fungus).